The primary structure comprises 504 residues: ATP synthase subunit alpha, chloroplastic (504 aa).

Residue 170–177 (GDRQTGKT) coordinates ATP.

Belongs to the ATPase alpha/beta chains family. As to quaternary structure, F-type ATPases have 2 components, CF(1) - the catalytic core - and CF(0) - the membrane proton channel. CF(1) has five subunits: alpha(3), beta(3), gamma(1), delta(1), epsilon(1). CF(0) has four main subunits: a, b, b' and c.

Its subcellular location is the plastid. It is found in the chloroplast thylakoid membrane. The catalysed reaction is ATP + H2O + 4 H(+)(in) = ADP + phosphate + 5 H(+)(out). Functionally, produces ATP from ADP in the presence of a proton gradient across the membrane. The alpha chain is a regulatory subunit. The polypeptide is ATP synthase subunit alpha, chloroplastic (Triticum aestivum (Wheat)).